The primary structure comprises 126 residues: Urease subunit beta (126 aa).

Belongs to the urease beta subunit family. As to quaternary structure, heterotrimer of UreA (gamma), UreB (beta) and UreC (alpha) subunits. Three heterotrimers associate to form the active enzyme.

Its subcellular location is the cytoplasm. The enzyme catalyses urea + 2 H2O + H(+) = hydrogencarbonate + 2 NH4(+). Its pathway is nitrogen metabolism; urea degradation; CO(2) and NH(3) from urea (urease route): step 1/1. This is Urease subunit beta from Sporosarcina pasteurii (Bacillus pasteurii).